A 514-amino-acid chain; its full sequence is Cytochrome P450 87A3 (514 aa).

Helical transmembrane passes span 36-56 (ASSM…VALL) and 315-335 (LMFV…TIGV). Cys-463 is a binding site for heme.

It belongs to the cytochrome P450 family. Heme is required as a cofactor. As to expression, expressed in roots and coleoptiles, but not in leaves.

The protein resides in the cytoplasmic vesicle membrane. The protein is Cytochrome P450 87A3 (CYP87A3) of Oryza sativa subsp. japonica (Rice).